We begin with the raw amino-acid sequence, 302 residues long: UDP-N-acetylenolpyruvoylglucosamine reductase (302 aa).

Residues 32–195 enclose the FAD-binding PCMH-type domain; that stretch reads LGGPADLLAR…VTVTLELVPD (164 aa). The active site involves R175. Catalysis depends on S224, which acts as the Proton donor. E294 is a catalytic residue.

Belongs to the MurB family. FAD is required as a cofactor.

The protein localises to the cytoplasm. It catalyses the reaction UDP-N-acetyl-alpha-D-muramate + NADP(+) = UDP-N-acetyl-3-O-(1-carboxyvinyl)-alpha-D-glucosamine + NADPH + H(+). It participates in cell wall biogenesis; peptidoglycan biosynthesis. Cell wall formation. This Moorella thermoacetica (strain ATCC 39073 / JCM 9320) protein is UDP-N-acetylenolpyruvoylglucosamine reductase.